The following is a 541-amino-acid chain: uncharacterized protein (541 aa).

A run of 12 helical transmembrane segments spans residues 99 to 119 (WIVV…SSVY), 131 to 153 (GVSI…FGSL), 165 to 185 (FVVY…GGCA), 187 to 207 (NIWT…TPLS), 224 to 244 (YVLP…PIIG), 256 to 276 (WVFW…FFFM), 325 to 345 (LLIT…VYII), 367 to 387 (IGLS…CTPI), 409 to 429 (LYPL…FAWT), 439 to 459 (WIVP…VFFV), 472 to 494 (AASA…SLVG), and 508 to 528 (SLLG…FIYG).

This sequence belongs to the major facilitator superfamily. CAR1 family.

It is found in the membrane. This is an uncharacterized protein from Schizosaccharomyces pombe (strain 972 / ATCC 24843) (Fission yeast).